A 225-amino-acid polypeptide reads, in one-letter code: Small ribosomal subunit protein uS2 (225 aa).

A compositionally biased stretch (basic and acidic residues) spans 1–13 (MAEAKPALEKEAA). Residues 1-33 (MAEAKPALEKEAAVKTGSIPSESEDETASHKEG) are disordered.

The protein belongs to the universal ribosomal protein uS2 family.

This chain is Small ribosomal subunit protein uS2, found in Methanosarcina acetivorans (strain ATCC 35395 / DSM 2834 / JCM 12185 / C2A).